The sequence spans 80 residues: Growth factor (80 aa).

A signal peptide spans 1-19 (MATRNLVASLLCIMYAVHA). The region spanning 29-73 (HVKVCNHDYENYCLNNGTCFTIALDNVSITPFCVCRINYEGSRCQ) is the EGF-like domain. Disulfide bonds link Cys-33/Cys-47, Cys-41/Cys-61, and Cys-63/Cys-72. N-linked (GlcNAc...) asparagine; by host glycosylation is found at Asn-44 and Asn-54.

It localises to the secreted. The polypeptide is Growth factor (Oryctolagus cuniculus (Rabbit)).